The following is a 36-amino-acid chain: F420-dependent NADP reductase (36 aa).

An NADP(+)-binding site is contributed by 9-12 (TGNI).

The protein belongs to the F420-dependent NADP reductase family. Homotetramer.

It carries out the reaction reduced coenzyme F420-(gamma-L-Glu)(n) + NADP(+) = oxidized coenzyme F420-(gamma-L-Glu)(n) + NADPH + 2 H(+). Catalyzes the reduction of NADP(+) with F420H(2) via hydride transfer, and the reverse reaction, i.e. the reduction of F420 with NADPH. In M.organophilum, an alcohol-fermenting methanogen containing an NADP-dependent alcohol dehydrogenase, is probably involved in the regeneration of F420H(2) required for CO(2) reduction to methane. Thus, during growth on alcohol and CO(2), the F420-dependent NADP reductase probably has the function of coupling the NADP-dependent oxidation of the alcohol to the aldehyde with the F420-dependent reduction of CO(2) to methane. The chain is F420-dependent NADP reductase (fno) from Methanogenium organophilum.